Here is a 255-residue protein sequence, read N- to C-terminus: 5'-nucleotidase SurE (255 aa).

A divalent metal cation is bound by residues D8, D9, S40, and N92.

It belongs to the SurE nucleotidase family. It depends on a divalent metal cation as a cofactor.

Its subcellular location is the cytoplasm. The catalysed reaction is a ribonucleoside 5'-phosphate + H2O = a ribonucleoside + phosphate. Its function is as follows. Nucleotidase that shows phosphatase activity on nucleoside 5'-monophosphates. This is 5'-nucleotidase SurE from Brucella abortus (strain S19).